The chain runs to 458 residues: Monomethylamine methyltransferase MtmB2 (458 aa).

Position 202 (Pyl202) is a non-standard amino acid, pyrrolysine.

This sequence belongs to the monomethylamine methyltransferase family. As to quaternary structure, can form a complex with MtmC.

It carries out the reaction Co(I)-[methylamine-specific corrinoid protein] + methylamine + H(+) = methyl-Co(III)-[methylamine-specific corrinoid protein] + NH4(+). Its pathway is one-carbon metabolism; methanogenesis from methylamine. Functionally, catalyzes the transfer of the methyl group from monomethylamine to the corrinoid cofactor of MtmC. In Methanosarcina acetivorans (strain ATCC 35395 / DSM 2834 / JCM 12185 / C2A), this protein is Monomethylamine methyltransferase MtmB2 (mtmB2).